Consider the following 219-residue polypeptide: Envelope protein US9 homolog (219 aa).

Topologically, residues 1–193 (MEKAEAAAVV…RHRRRRVALT (193 aa)) are intravirion. The Di-leucine internalization motif signature appears at 145 to 146 (LL). Residues 153-168 (DYDSESGCYYSESDNE) form an acidic region. A phosphoserine; by host CK2 mark is found at Ser-163 and Ser-165. A helical; Signal-anchor for type II membrane protein transmembrane segment spans residues 194 to 214 (VAGVILVVVLCAISGIVGAFL). The Virion surface portion of the chain corresponds to 215 to 219 (ARVFP).

This sequence belongs to the alphaherpesvirinae envelope protein US9 family. Phosphorylated on serines within the acidic cluster. Phosphorylation determines whether endocytosed viral US9 traffics to the trans-Golgi network or recycles to the cell membrane.

It localises to the virion membrane. The protein localises to the host Golgi apparatus membrane. Its subcellular location is the host smooth endoplasmic reticulum membrane. The protein resides in the host cell membrane. Essential for the anterograde spread of the infection throughout the host nervous system. Together with the gE/gI heterodimer, US9 is involved in the sorting and transport of viral structural components toward axon tips. This chain is Envelope protein US9 homolog, found in Equine herpesvirus 1 (strain Ab4p) (EHV-1).